The sequence spans 479 residues: Ribosomal RNA small subunit methyltransferase F (479 aa).

S-adenosyl-L-methionine contacts are provided by residues 125-131 (AAAPGSK), glutamate 149, aspartate 176, and aspartate 194. Cysteine 247 (nucleophile) is an active-site residue.

This sequence belongs to the class I-like SAM-binding methyltransferase superfamily. RsmB/NOP family.

The protein localises to the cytoplasm. It catalyses the reaction cytidine(1407) in 16S rRNA + S-adenosyl-L-methionine = 5-methylcytidine(1407) in 16S rRNA + S-adenosyl-L-homocysteine + H(+). Functionally, specifically methylates the cytosine at position 1407 (m5C1407) of 16S rRNA. This Escherichia coli (strain SE11) protein is Ribosomal RNA small subunit methyltransferase F.